Consider the following 531-residue polypeptide: Basal body-orientation factor 1 (531 aa).

Basic residues predominate over residues 1-19 (MPKLKVKAGKGKKGKRKKA). Residues 1–32 (MPKLKVKAGKGKKGKRKKAGKNEHRLDKESEV) form a disordered region. The segment covering 20-32 (GKNEHRLDKESEV) has biased composition (basic and acidic residues). Coiled coils occupy residues 26–213 (LDKE…AEKA) and 274–365 (VQEK…VESF). Positions 465-505 (QSRKSPGLKPSPPADVSSIKEKEINTSNLEEKPEESSSTFI) are disordered. Residues 482–499 (SIKEKEINTSNLEEKPEE) are compositionally biased toward basic and acidic residues.

It belongs to the BBOF1 family. Multiciliated cells.

The protein localises to the cytoplasm. It is found in the cytoskeleton. It localises to the cilium basal body. Functionally, basal body protein required in multiciliate cells to align and maintain cilia orientation in response to flow. May act by mediating a maturation step that stabilizes and aligns cilia orientation. Not required to respond to planar cell polarity (PCP) or flow-based orientation cues. This chain is Basal body-orientation factor 1 (ccdc176), found in Xenopus laevis (African clawed frog).